Here is a 423-residue protein sequence, read N- to C-terminus: Protein disulfide isomerase-like 5-2 (423 aa).

A signal peptide spans 1 to 35; it reads MAATTTRPLPLLLLLLLPPLLLLLLSFHAAAAAAA. The 114-residue stretch at 36–149 folds into the Thioredoxin domain; that stretch reads EEFPRDGRVI…LVRNLNKFVA (114 aa). Catalysis depends on nucleophile residues Cys71 and Cys74. A disulfide bond links Cys71 and Cys74. An N-linked (GlcNAc...) asparagine glycan is attached at Asn181. Residues 386–406 traverse the membrane as a helical segment; the sequence is LVSLNSLYILICVFALLGVMI.

Belongs to the protein disulfide isomerase family.

Its subcellular location is the membrane. Functionally, acts as a protein-folding catalyst that interacts with nascent polypeptides to catalyze the formation, isomerization, and reduction or oxidation of disulfide bonds. May play a role in storage protein biogenesis. This Oryza sativa subsp. japonica (Rice) protein is Protein disulfide isomerase-like 5-2 (PDIL5-2).